Reading from the N-terminus, the 479-residue chain is Octopamine receptor (479 aa).

Topologically, residues 1–57 (MGQAATHDANNYTSINYTEIYDVIEDEKDVCAVADEPNIPCSFGISLAVPEWEAICT) are extracellular. N-linked (GlcNAc...) asparagine glycosylation is found at Asn-11 and Asn-16. The helical transmembrane segment at 58 to 80 (AIILTMIIISTVVGNILVILSVF) threads the bilayer. The Cytoplasmic segment spans residues 81 to 90 (TYKPLRIVQN). Residues 91–112 (FFIVSLAVADLTVAILVLPLNV) form a helical membrane-spanning segment. At 113–129 (AYSILGQWVFGIYVCKM) the chain is on the extracellular side. A helical transmembrane segment spans residues 130 to 150 (WLTCDIMCCTSSILNLCAIAL). Residues 151–170 (DRYWAITDPINYAQKRTLER) are Cytoplasmic-facing. Residues 171–193 (VLFMIGIVWILSLVISSPPLLGW) traverse the membrane as a helical segment. Residues 194–218 (NDWPEVFEPDTPCRLTSQPGFVIFS) lie on the Extracellular side of the membrane. The helical transmembrane segment at 219-240 (SSGSFYIPLVIMTVVYFEIYLA) threads the bilayer. Over 241-407 (TKKRLRDRAK…LTRERRAART (167 aa)) the chain is Cytoplasmic. Residues 260–319 (GRNKYETKESDPNDQDSVSSDANPNEHQGGTRLVAENEKKHRTRKLTPKKKPKRRYWSKD) are disordered. Over residues 274-287 (QDSVSSDANPNEHQ) the composition is skewed to polar residues. The segment covering 299–315 (KHRTRKLTPKKKPKRRY) has biased composition (basic residues). A helical membrane pass occupies residues 408–429 (LGIIMGVFVVCWLPFFVIYLVI). Residues 430-441 (PFCVSCCLSNKF) are Extracellular-facing. The helical transmembrane segment at 442 to 462 (INFITWLGYVNSALNPLIYTI) threads the bilayer. The Cytoplasmic segment spans residues 463 to 479 (FNMDFRRAFKKLLFIKC).

Belongs to the G-protein coupled receptor 1 family.

The protein resides in the cell membrane. Functionally, receptor for octopamine. Octopamine (OA) is a neurotransmitter, neurohormone, and neuromodulator in invertebrates. The activity of this receptor is mediated by G proteins which activate adenylyl cyclase. The chain is Octopamine receptor from Bombyx mori (Silk moth).